The chain runs to 101 residues: Small ribosomal subunit protein uS14 (101 aa).

The disordered stretch occupies residues 53–72 (RDAAAVRVRNRDSHDGRPRG). Residues 61–70 (RNRDSHDGRP) show a composition bias toward basic and acidic residues.

This sequence belongs to the universal ribosomal protein uS14 family. As to quaternary structure, part of the 30S ribosomal subunit. Contacts proteins S3 and S10.

Its function is as follows. Binds 16S rRNA, required for the assembly of 30S particles and may also be responsible for determining the conformation of the 16S rRNA at the A site. The sequence is that of Small ribosomal subunit protein uS14 from Corynebacterium glutamicum (strain ATCC 13032 / DSM 20300 / JCM 1318 / BCRC 11384 / CCUG 27702 / LMG 3730 / NBRC 12168 / NCIMB 10025 / NRRL B-2784 / 534).